The sequence spans 468 residues: Gasdermin-C (468 aa).

Residues 1–230 form a triggers pyroptosis region; that stretch reads MSYTFDWLSK…CVILTSANTK (230 aa).

This sequence belongs to the gasdermin family. As to quaternary structure, homooligomer; homooligomeric ring-shaped pore complex containing 27-28 subunits when inserted in the membrane. Post-translationally, cleavage by CASP8 relieves autoinhibition by releasing the N-terminal moiety (Gasdermin-C, N-terminal) that initiates pyroptosis. Palmitoylated.

The protein resides in the cytoplasm. Its subcellular location is the cytosol. It localises to the cell membrane. Its activity is regulated as follows. The full-length protein before cleavage is inactive: intramolecular interactions between N- and C-terminal domains mediate autoinhibition in the absence of activation signal. The intrinsic pyroptosis-inducing activity is carried by the released N-terminal moiety (Gasdermin-C, N-terminal) following cleavage by caspase CASP8. In terms of biological role, this form constitutes the precursor of the pore-forming protein: upon cleavage, the released N-terminal moiety (Gasdermin-C, N-terminal) binds to membranes and forms pores, triggering pyroptosis. Its function is as follows. Pore-forming protein that causes membrane permeabilization and pyroptosis. Produced by the cleavage of gasdermin-C by caspase CASP8 in response to death signals. After cleavage, moves to the plasma membrane where it strongly binds to membrane inner leaflet lipids. Homooligomerizes within the membrane and forms pores of 10-15 nanometers (nm) of inner diameter, triggering pyroptosis. In Mus musculus (Mouse), this protein is Gasdermin-C.